The primary structure comprises 421 residues: Histidine--tRNA ligase (421 aa).

It belongs to the class-II aminoacyl-tRNA synthetase family. As to quaternary structure, homodimer.

It localises to the cytoplasm. The catalysed reaction is tRNA(His) + L-histidine + ATP = L-histidyl-tRNA(His) + AMP + diphosphate + H(+). The polypeptide is Histidine--tRNA ligase (Thermus thermophilus (strain ATCC BAA-163 / DSM 7039 / HB27)).